The following is a 410-amino-acid chain: WD repeat and FYVE domain-containing protein 1 (410 aa).

6 WD repeats span residues 22–61 (GHQD…QYWP), 66–105 (TMAS…NKMN), 112–150 (AHQN…NMLG), 153–192 (FFSS…CSVI), 197–236 (GHEG…GRTL), and 240–279 (GHHD…EEAP). Residues 281 to 352 (WLESDSCQKC…VCDSCYDSIK (72 aa)) form an FYVE-type zinc finger. Residues C287, C290, C314, C317, C322, C325, C344, and C347 each contribute to the Zn(2+) site. The WD 7 repeat unit spans residues 364-403 (EGKHNISHMSMDVARGLMVTCGTDRVVKIWDMTPVVGCSL). S408 bears the Phosphoserine mark.

Binds PtdIns3P in vitro with high specificity over other phosphoinositides. Interacts (via WD repeat 2) with tyrosine-phosphorylated TLR3 (via TIR domain) in response to poly(I:C). Interacts with TLR4 in response to LPS. Interacts with TICAM1 in response to poly(I:C).

It is found in the early endosome. In terms of biological role, positively regulates TLR3- and TLR4-mediated signaling pathways by bridging the interaction between TLR3 or TLR4 and TICAM1. Promotes TLR3/4 ligand-induced activation of transcription factors IRF3 and NF-kappa-B, as well as the production of IFN-beta and inflammatory cytokines. This chain is WD repeat and FYVE domain-containing protein 1 (WDFY1), found in Bos taurus (Bovine).